The sequence spans 243 residues: CAVP-target protein (243 aa).

The tract at residues Pro1–Pro22 is disordered. Low complexity predominate over residues Ala7–Ala20. An IQ domain is found at Ser35–Ser62. Ig-like C2-type domains follow at residues Pro59–Glu150 and Val151–Asn243.

Its function is as follows. This protein is the target of CAVP, which binds to it in a calcium-dependent manner. The protein is CAVP-target protein of Branchiostoma lanceolatum (Common lancelet).